The primary structure comprises 59 residues: Protein translocase subunit SecE (59 aa).

A helical transmembrane segment spans residues 37-57; it reads GIGIIIIGVIGFIISIIAQLL.

It belongs to the SecE/SEC61-gamma family. In terms of assembly, component of the Sec protein translocase complex. Heterotrimer consisting of SecY (alpha), SecG (beta) and SecE (gamma) subunits. The heterotrimers can form oligomers, although 1 heterotrimer is thought to be able to translocate proteins. Interacts with the ribosome. May interact with SecDF, and other proteins may be involved.

The protein localises to the cell membrane. Functionally, essential subunit of the Sec protein translocation channel SecYEG. Clamps together the 2 halves of SecY. May contact the channel plug during translocation. In Methanothermobacter thermautotrophicus (strain ATCC 29096 / DSM 1053 / JCM 10044 / NBRC 100330 / Delta H) (Methanobacterium thermoautotrophicum), this protein is Protein translocase subunit SecE.